Consider the following 350-residue polypeptide: Biotin synthase (350 aa).

The region spanning 41–268 is the Radical SAM core domain; the sequence is NEVQISRLLS…KSRVRLSAGR (228 aa). [4Fe-4S] cluster contacts are provided by cysteine 56, cysteine 60, and cysteine 63. The [2Fe-2S] cluster site is built by cysteine 100, cysteine 131, cysteine 191, and arginine 263.

Belongs to the radical SAM superfamily. Biotin synthase family. In terms of assembly, homodimer. [4Fe-4S] cluster serves as cofactor. [2Fe-2S] cluster is required as a cofactor.

The enzyme catalyses (4R,5S)-dethiobiotin + (sulfur carrier)-SH + 2 reduced [2Fe-2S]-[ferredoxin] + 2 S-adenosyl-L-methionine = (sulfur carrier)-H + biotin + 2 5'-deoxyadenosine + 2 L-methionine + 2 oxidized [2Fe-2S]-[ferredoxin]. The protein operates within cofactor biosynthesis; biotin biosynthesis; biotin from 7,8-diaminononanoate: step 2/2. Catalyzes the conversion of dethiobiotin (DTB) to biotin by the insertion of a sulfur atom into dethiobiotin via a radical-based mechanism. The chain is Biotin synthase from Shewanella frigidimarina (strain NCIMB 400).